A 141-amino-acid chain; its full sequence is Nucleoside triphosphatase NudI (141 aa).

Positions 1–141 (MRQRTIVCPL…RKTLRLKGLL (141 aa)) constitute a Nudix hydrolase domain. The short motif at 38–59 (GGVEPGERIEEALRREIREELG) is the Nudix box element.

It belongs to the Nudix hydrolase family. NudI subfamily. Monomer. Mg(2+) is required as a cofactor.

It carries out the reaction a ribonucleoside 5'-triphosphate + H2O = a ribonucleoside 5'-phosphate + diphosphate + H(+). It catalyses the reaction a 2'-deoxyribonucleoside 5'-triphosphate + H2O = a 2'-deoxyribonucleoside 5'-phosphate + diphosphate + H(+). The catalysed reaction is dUTP + H2O = dUMP + diphosphate + H(+). The enzyme catalyses dTTP + H2O = dTMP + diphosphate + H(+). It carries out the reaction dCTP + H2O = dCMP + diphosphate + H(+). In terms of biological role, catalyzes the hydrolysis of nucleoside triphosphates, with a preference for pyrimidine deoxynucleoside triphosphates (dUTP, dTTP and dCTP). This Escherichia coli (strain ATCC 8739 / DSM 1576 / NBRC 3972 / NCIMB 8545 / WDCM 00012 / Crooks) protein is Nucleoside triphosphatase NudI.